The primary structure comprises 81 residues: Sulfur carrier protein TusA (81 aa).

Catalysis depends on C19, which acts as the Cysteine persulfide intermediate.

The protein belongs to the sulfur carrier protein TusA family.

Its subcellular location is the cytoplasm. In terms of biological role, sulfur carrier protein which probably makes part of a sulfur-relay system. This Shewanella piezotolerans (strain WP3 / JCM 13877) protein is Sulfur carrier protein TusA.